The sequence spans 370 residues: Leucine-rich repeat and transmembrane domain-containing protein 2 (370 aa).

Residues 1-35 (MLAPGSSPGQRGRLALQWRQVSWITCWIALYAVEA) form the signal peptide. The LRRNT domain occupies 36-68 (LPTCPFSCKCDSRSLEVDCSGLGLTTVPPDVPA). Over 36-310 (LPTCPFSCKC…PASVRRAMGT (275 aa)) the chain is Extracellular. LRR repeat units lie at residues 69–90 (ATRTLLLLNNKLSALPSWAFAN), 93–114 (SLQRLDLSNNFLDRLPRSIFGD), 117–139 (NLTELQLRNNSIRTLDRDLLRHS), 141–162 (LLRHLDLSINGLAQLPPGLFDG), and 165–186 (ALRSLSLRSNRLQNLDRLTFEP). N-linked (GlcNAc...) asparagine glycosylation occurs at Asn-90. N-linked (GlcNAc...) asparagine glycans are attached at residues Asn-117 and Asn-125. Residues 198–252 (NPWECDCNLREFKHWMEWFSYRGGRLDQLACTLPKELRGKDMRMVPMEMFNYCSQ) form the LRRCT domain. Asn-257 carries an N-linked (GlcNAc...) asparagine glycan. Residues 261-300 (GLDIPGPPCTKASPEPAKPKPGAEPEPEPSTACPQKQRHR) are disordered. The helical transmembrane segment at 311-331 (VIIAGVVCGVVCIMMVVAAAY) threads the bilayer. At 332 to 370 (GCIYASLMAKYHRELKKRQPLMGDPEGEHEDQKQISSVA) the chain is on the cytoplasmic side. The segment at 351 to 370 (PLMGDPEGEHEDQKQISSVA) is disordered.

It localises to the membrane. In Homo sapiens (Human), this protein is Leucine-rich repeat and transmembrane domain-containing protein 2 (LRTM2).